A 345-amino-acid chain; its full sequence is Photosystem II protein D1 (345 aa).

3 consecutive transmembrane segments (helical) span residues Tyr-30–Thr-47, His-119–Leu-134, and Trp-143–Ala-157. A chlorophyll a-binding site is contributed by His-119. Tyr-127 is a binding site for pheophytin a. [CaMn4O5] cluster is bound by residues Asp-171 and Glu-190. A helical transmembrane segment spans residues Phe-198–Leu-219. Residue His-199 participates in chlorophyll a binding. A quinone-binding positions include His-216 and Ser-265–Phe-266. His-216 contacts Fe cation. Position 273 (His-273) interacts with Fe cation. Residues Phe-275–Leu-289 traverse the membrane as a helical segment. [CaMn4O5] cluster-binding residues include His-333, Glu-334, Asp-343, and Ala-345.

The protein belongs to the reaction center PufL/M/PsbA/D family. As to quaternary structure, PSII is composed of 1 copy each of membrane proteins PsbA, PsbB, PsbC, PsbD, PsbE, PsbF, PsbH, PsbI, PsbJ, PsbK, PsbL, PsbM, PsbT, PsbY, PsbZ, Psb30/Ycf12, at least 3 peripheral proteins of the oxygen-evolving complex and a large number of cofactors. It forms dimeric complexes. It depends on The D1/D2 heterodimer binds P680, chlorophylls that are the primary electron donor of PSII, and subsequent electron acceptors. It shares a non-heme iron and each subunit binds pheophytin, quinone, additional chlorophylls, carotenoids and lipids. D1 provides most of the ligands for the Mn4-Ca-O5 cluster of the oxygen-evolving complex (OEC). There is also a Cl(-1) ion associated with D1 and D2, which is required for oxygen evolution. The PSII complex binds additional chlorophylls, carotenoids and specific lipids. as a cofactor. Post-translationally, tyr-162 forms a radical intermediate that is referred to as redox-active TyrZ, YZ or Y-Z.

The protein localises to the plastid. The protein resides in the chloroplast thylakoid membrane. It carries out the reaction 2 a plastoquinone + 4 hnu + 2 H2O = 2 a plastoquinol + O2. Functionally, photosystem II (PSII) is a light-driven water:plastoquinone oxidoreductase that uses light energy to abstract electrons from H(2)O, generating O(2) and a proton gradient subsequently used for ATP formation. It consists of a core antenna complex that captures photons, and an electron transfer chain that converts photonic excitation into a charge separation. The D1/D2 (PsbA/PsbD) reaction center heterodimer binds P680, the primary electron donor of PSII as well as several subsequent electron acceptors. This chain is Photosystem II protein D1, found in Euglena gracilis.